The chain runs to 297 residues: Syntaxin-4 (297 aa).

Residues 1-12 (MRDRTHELRQGD) are compositionally biased toward basic and acidic residues. The tract at residues 1–21 (MRDRTHELRQGDDSSDEEDKE) is disordered. The Cytoplasmic segment spans residues 1–275 (MRDRTHELRQ…QKKARKKKVL (275 aa)). 2 positions are modified to phosphoserine: serine 14 and serine 15. The residue at position 31 (threonine 31) is a Phosphothreonine. Serine 36, serine 117, serine 208, and serine 248 each carry phosphoserine. Positions 43–163 (HKVRTIRQTI…ERIRRQLKIT (121 aa)) form a coiled coil. Positions 154–297 (ERIRRQLKIT…AVIIGVTVVG (144 aa)) are interaction with CENPF. A t-SNARE coiled-coil homology domain is found at 200 to 262 (LNEISARHSE…ERGQEHVKTA (63 aa)). Residues 276–296 (IAICVSITVVLLAVIIGVTVV) form a helical; Anchor for type IV membrane protein membrane-spanning segment. Glycine 297 is a topological domain (extracellular).

Belongs to the syntaxin family. Component of the SNARE complex composed of STX4, SNAP23 and VAMP7 that interacts with SYT7 during lysosomal exocytosis. Found in a complex with VAMP8 and SNAP23. Detected in a complex with SNAP23 and STXBP4. Interacts with VAMP2. Interacts with SNAP23 and SNAPIN. Interacts with LLGL1. Interacts (via C-terminus) with CENPF. Interacts with DOC2B. Interacts with STXBP6. Interacts with STXBP3; excludes interaction with DOC2B and SNAP25. Interacts with STXBP4; excludes interaction with VAMP2. Interacts with STXBP5L. Expressed in neutrophils and neutrophil-differentiated HL-60 cells. Expression in neutrophils increases with differentiation.

The protein localises to the cell membrane. The protein resides in the cell projection. Its subcellular location is the neuron projection. It is found in the stereocilium. Plasma membrane t-SNARE that mediates docking of transport vesicles. Necessary for the translocation of SLC2A4 from intracellular vesicles to the plasma membrane. In neurons, recruited at neurite tips to membrane domains rich in the phospholipid 1-oleoyl-2-palmitoyl-PC (OPPC) which promotes neurite tip surface expression of the dopamine transporter SLC6A3/DAT by facilitating fusion of SLC6A3-containing transport vesicles with the plasma membrane. Together with STXB3 and VAMP2, may also play a role in docking/fusion of intracellular GLUT4-containing vesicles with the cell surface in adipocytes and in docking of synaptic vesicles at presynaptic active zones. Required for normal hearing. This Homo sapiens (Human) protein is Syntaxin-4 (STX4).